Reading from the N-terminus, the 272-residue chain is Tryptophan synthase alpha chain (272 aa).

Catalysis depends on proton acceptor residues E49 and D60.

The protein belongs to the TrpA family. In terms of assembly, tetramer of two alpha and two beta chains.

The enzyme catalyses (1S,2R)-1-C-(indol-3-yl)glycerol 3-phosphate + L-serine = D-glyceraldehyde 3-phosphate + L-tryptophan + H2O. Its pathway is amino-acid biosynthesis; L-tryptophan biosynthesis; L-tryptophan from chorismate: step 5/5. Its function is as follows. The alpha subunit is responsible for the aldol cleavage of indoleglycerol phosphate to indole and glyceraldehyde 3-phosphate. This is Tryptophan synthase alpha chain from Hydrogenovibrio crunogenus (strain DSM 25203 / XCL-2) (Thiomicrospira crunogena).